Consider the following 163-residue polypeptide: Probable ribosome biogenesis protein RLP24 (163 aa).

This sequence belongs to the eukaryotic ribosomal protein eL24 family. Associated with nucleolar and cytoplasmic pre-60S particles. At the end of biogenesis it dissociates from cytoplasmic pre-60S particles and is likely to be exchanged for its ribosomal homolog, RPL24.

The protein resides in the nucleus. Its subcellular location is the nucleolus. Involved in the biogenesis of the 60S ribosomal subunit. Ensures the docking of GTPBP4/NOG1 to pre-60S particles. The chain is Probable ribosome biogenesis protein RLP24 (RSL24D1) from Homo sapiens (Human).